A 1324-amino-acid chain; its full sequence is Ubiquitin carboxyl-terminal hydrolase 42 (1324 aa).

Disordered regions lie at residues M1–W38 and Y63–A87. Polar residues predominate over residues S10–A25. A compositionally biased stretch (low complexity) spans Y63 to Q80. At S75 the chain carries Phosphoserine. The region spanning A111–S412 is the USP domain. The Nucleophile role is filled by C120. H371 serves as the catalytic Proton acceptor. Disordered stretches follow at residues I452–S494, Q536–P707, L722–S1026, R1085–R1131, D1149–S1254, and G1275–K1294. A compositionally biased stretch (low complexity) spans P477–S489. S483 carries the post-translational modification Phosphoserine. Residues Q536–Q564 show a composition bias toward polar residues. Low complexity predominate over residues S565–S576. Over residues E586–V603 the composition is skewed to polar residues. Phosphoserine occurs at positions 754 and 856. Composition is skewed to basic and acidic residues over residues A938 to E974, C984 to S1013, R1101 to R1113, D1149 to K1158, and D1165 to K1191. A Phosphoserine modification is found at S1181. The segment covering A1192–D1206 has biased composition (basic residues). Residues K1207–D1218 show a composition bias toward basic and acidic residues. Phosphoserine is present on residues S1219, S1222, and S1226. The span at H1231–R1245 shows a compositional bias: basic residues. Phosphoserine is present on S1247.

It belongs to the peptidase C19 family. As to expression, broadly expressed.

It carries out the reaction Thiol-dependent hydrolysis of ester, thioester, amide, peptide and isopeptide bonds formed by the C-terminal Gly of ubiquitin (a 76-residue protein attached to proteins as an intracellular targeting signal).. Its function is as follows. Deubiquitinating enzyme which may play an important role during spermatogenesis. In Homo sapiens (Human), this protein is Ubiquitin carboxyl-terminal hydrolase 42 (USP42).